We begin with the raw amino-acid sequence, 1262 residues long: Cytoplasmic FMR1-interacting protein homolog (1262 aa).

Residues 519–550 (LNRMTDVKGKKKSSAPKGDSANSSSSDIRIPR) form a disordered region.

Belongs to the CYFIP family. In terms of assembly, interacts with gex-3.

The protein localises to the cytoplasm. Its function is as follows. Required for initial steps of body morphogenesis. May play a role in egg laying and yolk protein clatherin-mediated endocytosis by oocytes during oogenesis. Plays a role in the formation of muscle connections, also called muscle arm extensions, between the body wall and the motor axons in the dorsal and ventral cord. The sequence is that of Cytoplasmic FMR1-interacting protein homolog from Caenorhabditis elegans.